The primary structure comprises 460 residues: Lipase member I (460 aa).

Positions 1–15 (MRVYIFLCLMCWVRS) are cleaved as a signal peptide. Asn63 is a glycosylation site (N-linked (GlcNAc...) asparagine). Ser159 acts as the Nucleophile in catalysis. Asp183 functions as the Charge relay system in the catalytic mechanism. Cys238 and Cys251 are joined by a disulfide. The active-site Charge relay system is the His253. 2 cysteine pairs are disulfide-bonded: Cys275–Cys286 and Cys289–Cys297. Asn396 carries an N-linked (GlcNAc...) asparagine glycan. Cys436 and Cys455 are disulfide-bonded.

This sequence belongs to the AB hydrolase superfamily. Lipase family. In terms of assembly, interacts with heparin with a high affinity. In terms of tissue distribution, expressed in testis. Expressed exclusively at the connecting piece of the sperm.

The protein resides in the cell membrane. It is found in the secreted. It carries out the reaction 1-hexadecanoyl-2-(9Z-octadecenoyl)-sn-glycero-3-phosphate + H2O = 2-(9Z-octadecenoyl)-sn-glycero-3-phosphate + hexadecanoate + H(+). With respect to regulation, inhibited by sodium vanadate. In terms of biological role, hydrolyzes specifically phosphatidic acid (PA) to produce 2-acyl lysophosphatidic acid (LPA; a potent bioactive lipid mediator) and fatty acid. Does not hydrolyze other phospholipids, like phosphatidylserine (PS), phosphatidylcholine (PC) and phosphatidylethanolamine (PE) or triacylglycerol (TG). In Homo sapiens (Human), this protein is Lipase member I (LIPI).